We begin with the raw amino-acid sequence, 207 residues long: MEKFTVLTGIAAPLPMINIDTDMIIPKQFLKTIKRTGLGKNLFDEMRFLEDGAENPDFILNKAAWRKATILVTGANFGCGSSREHAPWALLDFGIRCVIAPSFADIFFNNCFKNGILPIALPQVEIDKLLDDAGRGSNATLTVDLENQVIRGPDGGQIAFEIDAFRKHCLLNGLDDIGLTLQKGDKIDDFERTRAMSSPWLPIAKAV.

This sequence belongs to the LeuD family. LeuD type 1 subfamily. Heterodimer of LeuC and LeuD.

It catalyses the reaction (2R,3S)-3-isopropylmalate = (2S)-2-isopropylmalate. The protein operates within amino-acid biosynthesis; L-leucine biosynthesis; L-leucine from 3-methyl-2-oxobutanoate: step 2/4. Catalyzes the isomerization between 2-isopropylmalate and 3-isopropylmalate, via the formation of 2-isopropylmaleate. The chain is 3-isopropylmalate dehydratase small subunit from Rhodospirillum rubrum (strain ATCC 11170 / ATH 1.1.1 / DSM 467 / LMG 4362 / NCIMB 8255 / S1).